A 305-amino-acid polypeptide reads, in one-letter code: MNEQLQKILDTNRHHIQGGQLPTYIPELSKANKEALGIYVADLDGNEYGVGDYEYPFTIQSISKVVTLLLALSDRGEKYVFDKVGMEPTGDPFNSMMKLEVVRPSKPFNPMINAGAIAVTSMIKGDSQKERLERILGFFRQLTENPNLQVNQSVYRSEKITGDRNRSMAYFMKDVGIMQNDIESDLDLYFNQCSIEVTCKDIAKIGRFLANGGVLFETGQQLIDEKYIKMAEAFMVTCGMYNASGEFAIKVGIPAKSGVGGGIMASVPKKMGIGVVGPSLDEKGNSIAGVRVLQKMAEDYGLSIF.

7 residues coordinate substrate: S61, N113, E158, N165, Y189, Y241, and V259.

It belongs to the glutaminase family. In terms of assembly, homotetramer.

The enzyme catalyses L-glutamine + H2O = L-glutamate + NH4(+). This Alkaliphilus metalliredigens (strain QYMF) protein is Glutaminase.